Consider the following 208-residue polypeptide: Uracil phosphoribosyltransferase (208 aa).

5-phospho-alpha-D-ribose 1-diphosphate is bound by residues Arg78, Arg103, and Asp130–Ser138. Uracil-binding positions include Ile193 and Gly198 to Ala200. Asp199 is a 5-phospho-alpha-D-ribose 1-diphosphate binding site.

The protein belongs to the UPRTase family. Requires Mg(2+) as cofactor.

The catalysed reaction is UMP + diphosphate = 5-phospho-alpha-D-ribose 1-diphosphate + uracil. It functions in the pathway pyrimidine metabolism; UMP biosynthesis via salvage pathway; UMP from uracil: step 1/1. With respect to regulation, allosterically activated by GTP. Its function is as follows. Catalyzes the conversion of uracil and 5-phospho-alpha-D-ribose 1-diphosphate (PRPP) to UMP and diphosphate. The sequence is that of Uracil phosphoribosyltransferase from Salmonella agona (strain SL483).